Consider the following 1407-residue polypeptide: Adenylate cyclase, aggregation specific (1407 aa).

The Cytoplasmic segment spans residues 1–219 (MASSSPMFND…KGYLHQHYNS (219 aa)). Residues 28–131 (NELHDGNGGG…SNSVANGGHL (104 aa)) form a disordered region. The segment covering 51–63 (LNKSQNQPYTQYN) has biased composition (polar residues). The segment covering 64–75 (NGGGGGGGGGGH) has biased composition (gly residues). 2 stretches are compositionally biased toward low complexity: residues 80 to 90 (HLNLNSITNNH) and 98 to 115 (PNTL…NNHS). The next 6 membrane-spanning stretches (helical) occupy residues 220 to 240 (QIML…YGFT), 244 to 264 (IFML…SIFL), 276 to 296 (LFHP…LLEY), 304 to 324 (ILFL…LLFI), 325 to 345 (WMVM…FLES), and 353 to 373 (ISFV…LYVL). Topologically, residues 374–962 (EKFRKESFIA…KYVIINNVVE (589 aa)) are cytoplasmic. Residues 438–661 (SILCFDIVQF…DTIARSHTLE (224 aa)) form the Guanylate cyclase 1 domain. The Mg(2+) site is built by aspartate 443, isoleucine 444, and aspartate 488. Disordered stretches follow at residues 502–590 (AKKQ…EEIE), 751–799 (KSNN…VLGE), and 828–876 (NDIV…EEDF). Low complexity-rich tracts occupy residues 505–526 (QMPN…VNNI), 535–581 (NNNN…NNSG), and 752–795 (SNNN…SSSS). Over residues 828 to 846 (NDIVSPSLTSNSPILDTTV) the composition is skewed to polar residues. Residues 847–871 (NNNNNNNNTNNNNKNQNNIYGNNNN) show a composition bias toward low complexity. Helical transmembrane passes span 963 to 979 (TKFF…MFYL), 992 to 1012 (SNVI…LSFT), 1018 to 1038 (PLVY…CTVL), 1071 to 1091 (LSVL…SILI), and 1105 to 1125 (IGFV…KLAM). Residues 1189-1311 (SIMFIQIAGF…DTANTASRMQ (123 aa)) enclose the Guanylate cyclase 2 domain. Residues 1378-1398 (ATPAGIASPLSGTLLGEIGSF) form a helical membrane-spanning segment. At 1399–1407 (TTPRFHLSS) the chain is on the cytoplasmic side.

The protein belongs to the adenylyl cyclase class-4/guanylyl cyclase family. The cofactor is Mg(2+). As to expression, expressed throughout the structure in the tipped mound and finger. Expressed primarily in the prestalk region of the slug. In the early culminant expression is increased in the posterior prespore and anterior-most regions and expands into the developing stalk. In the mid and late culminant it is expressed throughout the stalk.

The protein localises to the membrane. It localises to the cell projection. Its subcellular location is the uropodium. It catalyses the reaction ATP = 3',5'-cyclic AMP + diphosphate. Regulated by cyclic AMP receptor 1 through a guanine nucleotide binding protein and protein CRAC. Both positively and negatively regulated by extracellular cAMP; this regulation is part of the mechanism that establishes the oscillatory cAMP waves during aggregation. Functionally, coordinates cell aggregation by synthesizing the cAMP that influences differentiation and morphogenesis of cells within a developing multicellular structure. The protein is Adenylate cyclase, aggregation specific (acaA) of Dictyostelium discoideum (Social amoeba).